We begin with the raw amino-acid sequence, 91 residues long: Glycophorin-B (91 aa).

An N-terminal signal peptide occupies residues 1–19 (MYGKIIFVLLLSEIVSISA). At 20-59 (LSTTEVAMHTSTSSSVTKSYISSQTNGETGQLVHRFTVPA) the chain is on the extracellular side. The O-linked (GalNAc...) threonine glycan is linked to threonine 36. O-linked (GalNAc...) serine glycosylation is present at serine 38. Residues 60-81 (PVVIILIILCVMAGIIGTILLI) form a helical membrane-spanning segment. Over 82–91 (SYSIRRLIKA) the chain is Cytoplasmic.

The protein belongs to the glycophorin-A family. In terms of assembly, component of the ankyrin-1 complex in the erythrocyte, composed of ANK1, RHCE, RHAG, SLC4A1, EPB42, GYPA, GYPB and AQP1. Interacts (via the N-terminal) with RHAG; this interaction bridges the (RHAG)2(RHCE) heterotrimer with the SLC4A1 Band 3 I dimer complexed with GYPA. In terms of processing, the N-terminal extracellular domain is heavily glycosylated on serine and threonine residues.

It is found in the cell membrane. Its function is as follows. Component of the ankyrin-1 complex, a multiprotein complex involved in the stability and shape of the erythrocyte membrane. This is Glycophorin-B from Homo sapiens (Human).